The sequence spans 246 residues: Triosephosphate isomerase (246 aa).

9-11 (NWK) serves as a coordination point for substrate. His-99 serves as the catalytic Electrophile. Glu-168 functions as the Proton acceptor in the catalytic mechanism. Substrate contacts are provided by residues Gly-174, Ser-207, and 228 to 229 (GG).

Belongs to the triosephosphate isomerase family. As to quaternary structure, homodimer.

It is found in the cytoplasm. The catalysed reaction is D-glyceraldehyde 3-phosphate = dihydroxyacetone phosphate. Its pathway is carbohydrate biosynthesis; gluconeogenesis. It participates in carbohydrate degradation; glycolysis; D-glyceraldehyde 3-phosphate from glycerone phosphate: step 1/1. Functionally, involved in the gluconeogenesis. Catalyzes stereospecifically the conversion of dihydroxyacetone phosphate (DHAP) to D-glyceraldehyde-3-phosphate (G3P). The protein is Triosephosphate isomerase of Prochlorococcus marinus (strain NATL1A).